The following is a 479-amino-acid chain: Glycerol-3-phosphate acyltransferase RAM2 (479 aa).

The next 4 membrane-spanning stretches (helical) occupy residues 14–34 (YFAL…LVLA), 37–57 (LAGL…LIFA), 215–235 (SPLM…LACL), and 237–257 (IAAG…ALGV). Positions 284–289 (HRTLLD) match the HXXXXD motif motif. The N-linked (GlcNAc...) asparagine glycan is linked to N448.

Belongs to the GPAT/DAPAT family.

The protein localises to the membrane. It carries out the reaction sn-glycerol 3-phosphate + an acyl-CoA = a 1-acyl-sn-glycero-3-phosphate + CoA. Its pathway is lipid metabolism; glycerolipid metabolism. Its function is as follows. Involved in the production of cutin monomers. Esterifies acyl-group from acyl-ACP to the sn-2 position of glycerol-3-phosphate, a step in cutin biosynthesis. Required for colonization of the root by mycorrhizal fungi, and appropriate hyphopodia and arbuscule formation. Cutin monomers act as plant signals that promote colonization by arbuscular mycorrhizal fungi. This signaling function has been recruited by pathogenic oomycetes to facilitate appressoria formation and their own invasion. This Petunia hybrida (Petunia) protein is Glycerol-3-phosphate acyltransferase RAM2.